The chain runs to 131 residues: Small ribosomal subunit protein uS8 (131 aa).

Belongs to the universal ribosomal protein uS8 family. In terms of assembly, part of the 30S ribosomal subunit. Contacts proteins S5 and S12.

One of the primary rRNA binding proteins, it binds directly to 16S rRNA central domain where it helps coordinate assembly of the platform of the 30S subunit. The polypeptide is Small ribosomal subunit protein uS8 (Hamiltonella defensa subsp. Acyrthosiphon pisum (strain 5AT)).